We begin with the raw amino-acid sequence, 390 residues long: Succinate--CoA ligase [ADP-forming] subunit beta (390 aa).

The ATP-grasp domain maps to 9–245; the sequence is KHLLKKYNIP…TTQEDEHETM (237 aa). Residues Lys46, 53–55, Glu99, Ser102, and Glu107 each bind ATP; that span reads GRG. Residues Asn200 and Asp214 each coordinate Mg(2+). Residues Asn265 and 322–324 contribute to the substrate site; that span reads GIV.

The protein belongs to the succinate/malate CoA ligase beta subunit family. As to quaternary structure, heterotetramer of two alpha and two beta subunits. Mg(2+) is required as a cofactor.

The enzyme catalyses succinate + ATP + CoA = succinyl-CoA + ADP + phosphate. It carries out the reaction GTP + succinate + CoA = succinyl-CoA + GDP + phosphate. Its pathway is carbohydrate metabolism; tricarboxylic acid cycle; succinate from succinyl-CoA (ligase route): step 1/1. Succinyl-CoA synthetase functions in the citric acid cycle (TCA), coupling the hydrolysis of succinyl-CoA to the synthesis of either ATP or GTP and thus represents the only step of substrate-level phosphorylation in the TCA. The beta subunit provides nucleotide specificity of the enzyme and binds the substrate succinate, while the binding sites for coenzyme A and phosphate are found in the alpha subunit. The sequence is that of Succinate--CoA ligase [ADP-forming] subunit beta from Coxiella burnetii (strain RSA 493 / Nine Mile phase I).